The chain runs to 68 residues: Acylphosphatase (68 aa).

The 66-residue stretch at 3-68 (RIACTVHGRV…RCTAGLPSAP (66 aa)) folds into the Acylphosphatase-like domain. Active-site residues include R18 and N36.

The protein belongs to the acylphosphatase family.

It carries out the reaction an acyl phosphate + H2O = a carboxylate + phosphate + H(+). The sequence is that of Acylphosphatase (acyP) from Oleidesulfovibrio alaskensis (strain ATCC BAA-1058 / DSM 17464 / G20) (Desulfovibrio alaskensis).